Consider the following 299-residue polypeptide: Aspartate carbamoyltransferase catalytic subunit (299 aa).

Residues Arg51 and Thr52 each contribute to the carbamoyl phosphate site. Lys80 contacts L-aspartate. Residues Arg101, His129, and Gln132 each contribute to the carbamoyl phosphate site. The L-aspartate site is built by Arg162 and Arg221. Carbamoyl phosphate is bound by residues Leu260 and Pro261.

Belongs to the aspartate/ornithine carbamoyltransferase superfamily. ATCase family. As to quaternary structure, heterooligomer of catalytic and regulatory chains.

The enzyme catalyses carbamoyl phosphate + L-aspartate = N-carbamoyl-L-aspartate + phosphate + H(+). It functions in the pathway pyrimidine metabolism; UMP biosynthesis via de novo pathway; (S)-dihydroorotate from bicarbonate: step 2/3. In terms of biological role, catalyzes the condensation of carbamoyl phosphate and aspartate to form carbamoyl aspartate and inorganic phosphate, the committed step in the de novo pyrimidine nucleotide biosynthesis pathway. This chain is Aspartate carbamoyltransferase catalytic subunit, found in Sulfolobus acidocaldarius (strain ATCC 33909 / DSM 639 / JCM 8929 / NBRC 15157 / NCIMB 11770).